A 513-amino-acid polypeptide reads, in one-letter code: Melianol synthase CYP71BQ4 (513 aa).

A helical membrane pass occupies residues 10–30 (MLHLPSLPVLLSFLLFLLMLI). Residue C451 coordinates heme.

The protein belongs to the cytochrome P450 family. Heme serves as cofactor. Accumulates in mature fruits and in juice vesicles.

Its subcellular location is the membrane. The catalysed reaction is dihydroniloticin + 2 reduced [NADPH--hemoprotein reductase] + 2 O2 = melianol + 2 oxidized [NADPH--hemoprotein reductase] + 3 H2O + 2 H(+). It participates in secondary metabolite biosynthesis; terpenoid biosynthesis. Its function is as follows. Monooxygenase involved in the biosynthesis of limonoids triterpene natural products such as limonin, a compound with insecticidal activity responsible for the bitter taste in citrus. Catalyzes the conversion of dihydroniloticin to the protolimonoid melianol. The sequence is that of Melianol synthase CYP71BQ4 from Citrus sinensis (Sweet orange).